Consider the following 120-residue polypeptide: Large ribosomal subunit protein uL14 (120 aa).

The protein belongs to the universal ribosomal protein uL14 family. Part of the 50S ribosomal subunit. Forms a cluster with proteins L3 and L19. In the 70S ribosome, L14 and L19 interact and together make contacts with the 16S rRNA in bridges B5 and B8.

In terms of biological role, binds to 23S rRNA. Forms part of two intersubunit bridges in the 70S ribosome. This chain is Large ribosomal subunit protein uL14, found in Karelsulcia muelleri (strain GWSS) (Sulcia muelleri).